The sequence spans 123 residues: Small ribosomal subunit protein uS12 (123 aa).

A disordered region spans residues 1 to 30; the sequence is MPTIQQLIRKPRQPKVQRSKSQHLQSCPQK. Residues 9 to 21 are compositionally biased toward basic residues; sequence RKPRQPKVQRSKS. Asp-89 is subject to 3-methylthioaspartic acid.

This sequence belongs to the universal ribosomal protein uS12 family. As to quaternary structure, part of the 30S ribosomal subunit. Contacts proteins S8 and S17. May interact with IF1 in the 30S initiation complex.

Functionally, with S4 and S5 plays an important role in translational accuracy. In terms of biological role, interacts with and stabilizes bases of the 16S rRNA that are involved in tRNA selection in the A site and with the mRNA backbone. Located at the interface of the 30S and 50S subunits, it traverses the body of the 30S subunit contacting proteins on the other side and probably holding the rRNA structure together. The combined cluster of proteins S8, S12 and S17 appears to hold together the shoulder and platform of the 30S subunit. The chain is Small ribosomal subunit protein uS12 from Paracoccus denitrificans (strain Pd 1222).